We begin with the raw amino-acid sequence, 93 residues long: Cell division protein CrgA (93 aa).

The next 2 membrane-spanning stretches (helical) occupy residues 31–51 (VWFV…LMVF) and 70–90 (LGPW…LLTM).

The protein belongs to the CrgA family.

It localises to the cell membrane. Functionally, involved in cell division. This is Cell division protein CrgA from Mycobacterium leprae (strain Br4923).